The sequence spans 173 residues: 2-C-methyl-D-erythritol 2,4-cyclodiphosphate synthase (173 aa).

The a divalent metal cation site is built by D17 and H19. Residues 17–19 (DVH) and 49–50 (HS) contribute to the 4-CDP-2-C-methyl-D-erythritol 2-phosphate site. Position 57 (H57) interacts with a divalent metal cation. Residues 76 to 80 (FPNTD), 147 to 150 (TTTE), and R157 contribute to the 4-CDP-2-C-methyl-D-erythritol 2-phosphate site.

Belongs to the IspF family. As to quaternary structure, homotrimer. Requires a divalent metal cation as cofactor.

The enzyme catalyses 4-CDP-2-C-methyl-D-erythritol 2-phosphate = 2-C-methyl-D-erythritol 2,4-cyclic diphosphate + CMP. It participates in isoprenoid biosynthesis; isopentenyl diphosphate biosynthesis via DXP pathway; isopentenyl diphosphate from 1-deoxy-D-xylulose 5-phosphate: step 4/6. Functionally, involved in the biosynthesis of isopentenyl diphosphate (IPP) and dimethylallyl diphosphate (DMAPP), two major building blocks of isoprenoid compounds. Catalyzes the conversion of 4-diphosphocytidyl-2-C-methyl-D-erythritol 2-phosphate (CDP-ME2P) to 2-C-methyl-D-erythritol 2,4-cyclodiphosphate (ME-CPP) with a corresponding release of cytidine 5-monophosphate (CMP). This is 2-C-methyl-D-erythritol 2,4-cyclodiphosphate synthase from Ehrlichia ruminantium (strain Welgevonden).